The following is a 497-amino-acid chain: Glycerol kinase (497 aa).

Threonine 12 provides a ligand contact to ADP. Residues threonine 12, threonine 13, and serine 14 each contribute to the ATP site. Threonine 12 contributes to the sn-glycerol 3-phosphate binding site. Arginine 16 serves as a coordination point for ADP. Residues arginine 82, glutamate 83, tyrosine 134, and aspartate 243 each coordinate sn-glycerol 3-phosphate. Glycerol is bound by residues arginine 82, glutamate 83, tyrosine 134, aspartate 243, and glutamine 244. The ADP site is built by threonine 265 and glycine 308. 4 residues coordinate ATP: threonine 265, glycine 308, glutamine 312, and glycine 411. Glycine 411 is a binding site for ADP.

Belongs to the FGGY kinase family.

It catalyses the reaction glycerol + ATP = sn-glycerol 3-phosphate + ADP + H(+). It participates in polyol metabolism; glycerol degradation via glycerol kinase pathway; sn-glycerol 3-phosphate from glycerol: step 1/1. Its activity is regulated as follows. Inhibited by fructose 1,6-bisphosphate (FBP). Its function is as follows. Key enzyme in the regulation of glycerol uptake and metabolism. Catalyzes the phosphorylation of glycerol to yield sn-glycerol 3-phosphate. This Rhizobium meliloti (strain 1021) (Ensifer meliloti) protein is Glycerol kinase.